The primary structure comprises 207 residues: Transcription factor bHLH149 (207 aa).

A disordered region spans residues 1-25 (MVESLFPSIENTGESSRRKKPRISE). The bHLH domain occupies 132–181 (KSRKGLTETNRIKLPAVERKLKILGRLVPGCRKVSVPNLLDEATDYIAAL).

Homodimer. Interacts with PRE3.

It is found in the nucleus. Its function is as follows. Atypical bHLH transcription factor probably unable to bind DNA. Negatively regulates brassinosteroid signaling. In Arabidopsis thaliana (Mouse-ear cress), this protein is Transcription factor bHLH149 (BHLH149).